A 258-amino-acid polypeptide reads, in one-letter code: 2S seed storage albumin protein (258 aa).

A signal peptide spans Met-1–Ala-24. A propeptide spanning residues Tyr-25–Asp-35 is cleaved from the precursor. Disulfide bonds link Cys-49/Cys-108, Cys-61/Cys-97, Cys-98/Cys-145, and Cys-110/Cys-149. The disordered stretch occupies residues Tyr-64–Gln-87. The residue at position 69 (Ser-69) is a Phosphoserine. Basic and acidic residues predominate over residues Ser-73–Gly-83. Residues Glu-77–Asn-86 constitute a propeptide that is removed on maturation. Gln-87 bears the Pyrrolidone carboxylic acid mark. Propeptides lie at residues Arg-154–Asn-156 and Ser-191–Asn-193. 4 cysteine pairs are disulfide-bonded: Cys-162–Cys-212, Cys-175–Cys-201, Cys-202–Cys-249, and Cys-214–Cys-256. Gln-194 is subject to Pyrrolidone carboxylic acid.

This sequence belongs to the 2S seed storage albumins family. The 2 mature proteins consist of heterodimers of a small and a large chain; disulfide-linked. The N-terminus of both large chains is blocked. Post-translationally, the C-terminus of the allergen Ric c 1 and allergen Ric c 3 small chains are heterogeneous and the length of the chains can vary from 33 to 36 amino acids and from 36 to 40 amino acids respectively.

Its function is as follows. 2S seed storage proteins. This chain is 2S seed storage albumin protein, found in Ricinus communis (Castor bean).